The sequence spans 189 residues: Casparian strip membrane protein 1 (189 aa).

The Cytoplasmic portion of the chain corresponds to 1 to 25 (MMQAESGSAEAKGPLPPPVGRKRRG). A helical membrane pass occupies residues 26-46 (LGILDFLLRLLAIGATLSAAI). The Extracellular segment spans residues 47–73 (TMGTTNETLQFFTQFFQFKARFYDLSA). Asn52 carries an N-linked (GlcNAc...) asparagine glycan. A helical transmembrane segment spans residues 74-94 (FIYFVIANAIVGGYLLLSLPI). Topologically, residues 95-108 (SILNIVRPRAASSR) are cytoplasmic. Residues 109–129 (VFLIFFDTVMVAVCTSGAAAA) form a helical membrane-spanning segment. Residues 130–158 (VAILYVARKGNSRTNWFAICQRFNSFCNQ) lie on the Extracellular side of the membrane. The helical transmembrane segment at 159 to 179 (AIGAVSASFAGVVFLILLVLL) threads the bilayer. Residues 180–189 (SASTLYRRRP) lie on the Cytoplasmic side of the membrane.

This sequence belongs to the Casparian strip membrane proteins (CASP) family. In terms of assembly, homodimer and heterodimers.

The protein localises to the cell membrane. Its function is as follows. Regulates membrane-cell wall junctions and localized cell wall deposition. Required for establishment of the Casparian strip membrane domain (CSD) and the subsequent formation of Casparian strips, a cell wall modification of the root endodermis that determines an apoplastic barrier between the intraorganismal apoplasm and the extraorganismal apoplasm and prevents lateral diffusion. The sequence is that of Casparian strip membrane protein 1 from Picea glauca (White spruce).